The chain runs to 99 residues: Osteocalcin (99 aa).

A signal peptide spans Met1–Ala23. Residues Lys24–Arg49 constitute a propeptide that is removed on maturation. Residues Tyr50–Gly96 form the Gla domain. Position 58 is a hydroxyproline (Pro58). Positions 66, 70, 73, and 79 each coordinate Ca(2+). 4-carboxyglutamate is present on residues Glu66, Glu70, and Glu73. Cys72 and Cys78 are disulfide-bonded.

It belongs to the osteocalcin/matrix Gla protein family. In terms of processing, gamma-carboxyglutamate residues are formed by vitamin K dependent carboxylation by GGCX. These residues are essential for the binding of calcium. Decarboxylation promotes the hormone activity.

The protein resides in the secreted. In terms of biological role, the carboxylated form is one of the main organic components of the bone matrix, which constitutes 1-2% of the total bone protein: it acts as a negative regulator of bone formation and is required to limit bone formation without impairing bone resorption or mineralization. The carboxylated form binds strongly to apatite and calcium. Functionally, the uncarboxylated form acts as a hormone secreted by osteoblasts, which regulates different cellular processes, such as energy metabolism, male fertility and brain development. Regulates of energy metabolism by acting as a hormone favoring pancreatic beta-cell proliferation, insulin secretion and sensitivity and energy expenditure. Uncarboxylated osteocalcin hormone also promotes testosterone production in the testes: acts as a ligand for G protein-coupled receptor GPRC6A at the surface of Leydig cells, initiating a signaling response that promotes the expression of enzymes required for testosterone synthesis in a CREB-dependent manner. Also acts as a regulator of brain development: osteocalcin hormone crosses the blood-brain barrier and acts as a ligand for GPR158 on neurons, initiating a signaling response that prevents neuronal apoptosis in the hippocampus, favors the synthesis of all monoamine neurotransmitters and inhibits that of gamma-aminobutyric acid (GABA). Osteocalcin also crosses the placenta during pregnancy and maternal osteocalcin is required for fetal brain development. This Rattus norvegicus (Rat) protein is Osteocalcin (Bglap).